We begin with the raw amino-acid sequence, 672 residues long: Beta-galactosidase BgaB (672 aa).

Arg-109 contributes to the substrate binding site. Residue Cys-113 coordinates Zn(2+). Asn-147 lines the substrate pocket. The active-site Proton donor is Glu-148. Positions 156, 158, and 161 each coordinate Zn(2+). Glu-303 (nucleophile) is an active-site residue. Substrate contacts are provided by residues Trp-311 and 351 to 354 (EKFH).

Belongs to the glycosyl hydrolase 42 family.

It carries out the reaction Hydrolysis of terminal non-reducing beta-D-galactose residues in beta-D-galactosides.. This Geobacillus sp. (strain Y412MC61) protein is Beta-galactosidase BgaB.